Reading from the N-terminus, the 803-residue chain is Carbon monoxide dehydrogenase large chain (803 aa).

Arg384 carries the 4-hydroxyarginine modification. Cys385 contacts Cu(+). Position 757 (Glu757) interacts with Mo-molybdopterin cytosine dinucleotide.

Dimer of heterotrimers. Each heterotrimer consists of a large, a medium and a small subunit. Requires Cu(+) as cofactor. Mo-molybdopterin cytosine dinucleotide is required as a cofactor.

It catalyses the reaction CO + a quinone + H2O = a quinol + CO2. Catalyzes the oxidation of carbon monoxide to carbon dioxide. The sequence is that of Carbon monoxide dehydrogenase large chain (cutL) from Hydrogenophaga pseudoflava (Pseudomonas carboxydoflava).